A 345-amino-acid chain; its full sequence is UDP-N-acetylenolpyruvoylglucosamine reductase (345 aa).

An FAD-binding PCMH-type domain is found at 16 to 186 (LSVSASCIKV…TAVGIFLKKE (171 aa)). The active site involves Arg162. The Proton donor role is filled by Ser232. The active site involves Glu328.

This sequence belongs to the MurB family. It depends on FAD as a cofactor.

Its subcellular location is the cytoplasm. It catalyses the reaction UDP-N-acetyl-alpha-D-muramate + NADP(+) = UDP-N-acetyl-3-O-(1-carboxyvinyl)-alpha-D-glucosamine + NADPH + H(+). It participates in cell wall biogenesis; peptidoglycan biosynthesis. Functionally, cell wall formation. The polypeptide is UDP-N-acetylenolpyruvoylglucosamine reductase (Pectobacterium atrosepticum (strain SCRI 1043 / ATCC BAA-672) (Erwinia carotovora subsp. atroseptica)).